A 267-amino-acid polypeptide reads, in one-letter code: 4-hydroxy-tetrahydrodipicolinate reductase (267 aa).

NAD(+) contacts are provided by residues 8 to 13 (GAAGRM) and Asp34. Residue Arg35 participates in NADP(+) binding. Residues 98–100 (GTT) and 122–125 (AANF) each bind NAD(+). Residue His155 is the Proton donor/acceptor of the active site. His156 lines the (S)-2,3,4,5-tetrahydrodipicolinate pocket. The active-site Proton donor is Lys159. Residue 165-166 (GT) coordinates (S)-2,3,4,5-tetrahydrodipicolinate.

The protein belongs to the DapB family.

Its subcellular location is the cytoplasm. It carries out the reaction (S)-2,3,4,5-tetrahydrodipicolinate + NAD(+) + H2O = (2S,4S)-4-hydroxy-2,3,4,5-tetrahydrodipicolinate + NADH + H(+). It catalyses the reaction (S)-2,3,4,5-tetrahydrodipicolinate + NADP(+) + H2O = (2S,4S)-4-hydroxy-2,3,4,5-tetrahydrodipicolinate + NADPH + H(+). Its pathway is amino-acid biosynthesis; L-lysine biosynthesis via DAP pathway; (S)-tetrahydrodipicolinate from L-aspartate: step 4/4. Functionally, catalyzes the conversion of 4-hydroxy-tetrahydrodipicolinate (HTPA) to tetrahydrodipicolinate. In Pseudomonas putida (strain W619), this protein is 4-hydroxy-tetrahydrodipicolinate reductase.